Consider the following 473-residue polypeptide: Phosphatidylserine synthase 1 (473 aa).

Topologically, residues 1-35 are cytoplasmic; that stretch reads MAACVGSRTLSKDDVNYRLHFRMINEQQVEDITLE. Residues 36-56 traverse the membrane as a helical segment; that stretch reads FFYRPHTITLLSFTILSLMAF. Over 57 to 72 the chain is Lumenal; it reads AFTRDDSVPEENIWRG. The chain crosses the membrane as a helical span at residues 73 to 93; the sequence is ILSVIFFFLIISVLAFPNGPF. Residues 94 to 102 are Cytoplasmic-facing; sequence TRPHPAIWR. A helical transmembrane segment spans residues 103–123; sequence MVFGLSVLYFLFLVFVLFLNF. Residues 124 to 186 lie on the Lumenal side of the membrane; the sequence is EQVKAVMYWL…AMKALLIRSY (63 aa). The helical transmembrane segment at 187–207 threads the bilayer; the sequence is GLCWTISITWELTELFFMHLL. Over 208 to 216 the chain is Cytoplasmic; it reads PNFAECWWD. The helical transmembrane segment at 217-237 threads the bilayer; it reads QVILDILLCNGGGIWLGMVVC. The Lumenal segment spans residues 238–286; it reads RFLEMRTYHWASFKDIHTTTGKIKRAVLQFTPASWTYVRWFDPKSSFQR. The chain crosses the membrane as a helical span at residues 287-307; the sequence is VAGIYLFMIIWQLTELNTFFL. Residues 308–319 are Cytoplasmic-facing; the sequence is KHIFVFQASHPL. Residues 320-342 form a helical membrane-spanning segment; the sequence is SWGRILFIGIITAPTVRQYYAYL. Topologically, residues 343–355 are lumenal; the sequence is TDTQCKRVGTQCW. The helical transmembrane segment at 356 to 376 threads the bilayer; that stretch reads VFGVIAFLEAIVCIKFGQDLF. Residues 377-380 lie on the Cytoplasmic side of the membrane; sequence SKTQ. A helical transmembrane segment spans residues 381–401; the sequence is ILYVVFWLLCVAFTTFLCLYG. The Lumenal portion of the chain corresponds to 402–473; the sequence is MVWYAEYYGH…SKVTNGIGKK (72 aa). The tract at residues 420 to 473 is disordered; sequence EDSPYSPDASWLHSKFSKGADNSPPKHPVNSESHSSRRRNRHSRSKVTNGIGKK. Positions 455 to 464 are enriched in basic residues; sequence SRRRNRHSRS.

The protein belongs to the phosphatidyl serine synthase family.

Its subcellular location is the endoplasmic reticulum membrane. The catalysed reaction is a 1,2-diacyl-sn-glycero-3-phosphoethanolamine + L-serine = a 1,2-diacyl-sn-glycero-3-phospho-L-serine + ethanolamine. It catalyses the reaction a 1,2-diacyl-sn-glycero-3-phosphocholine + L-serine = a 1,2-diacyl-sn-glycero-3-phospho-L-serine + choline. The protein operates within phospholipid metabolism; phosphatidylserine biosynthesis. In terms of biological role, catalyzes a base-exchange reaction in which the polar head group of phosphatidylethanolamine (PE) or phosphatidylcholine (PC) is replaced by L-serine. Catalyzes mainly the conversion of phosphatidylcholine but also converts, in vitro and to a lesser extent, phosphatidylethanolamine. This chain is Phosphatidylserine synthase 1 (PTDSS1), found in Gallus gallus (Chicken).